A 105-amino-acid polypeptide reads, in one-letter code: UPF0145 protein lpl0253 (105 aa).

Belongs to the UPF0145 family.

This Legionella pneumophila (strain Lens) protein is UPF0145 protein lpl0253.